The sequence spans 43 residues: Hainantoxin F5-22.36 (43 aa).

3 disulfides stabilise this stretch: Cys1–Cys19, Cys8–Cys24, and Cys18–Cys38.

The protein belongs to the neurotoxin 14 (magi-1) family. 02 (HWTX-XVIc) subfamily. In terms of tissue distribution, expressed by the venom gland.

The protein resides in the secreted. In terms of biological role, probable ion channel inhibitor. The protein is Hainantoxin F5-22.36 of Cyriopagopus hainanus (Chinese bird spider).